A 335-amino-acid polypeptide reads, in one-letter code: UPF0065 protein BB4329 (335 aa).

Residues 1–39 (MNKNIPAFHRRCHGLVQGLARTLLLAPVLLALSVPAAQA) form the signal peptide.

Belongs to the UPF0065 (bug) family.

The protein resides in the periplasm. This chain is UPF0065 protein BB4329, found in Bordetella bronchiseptica (strain ATCC BAA-588 / NCTC 13252 / RB50) (Alcaligenes bronchisepticus).